The primary structure comprises 226 residues: uncharacterized protein (226 aa).

This is an uncharacterized protein from Bacillus subtilis (strain 168).